Reading from the N-terminus, the 232-residue chain is Large ribosomal subunit protein uL1 (232 aa).

The protein belongs to the universal ribosomal protein uL1 family. Part of the 50S ribosomal subunit.

Its function is as follows. Binds directly to 23S rRNA. The L1 stalk is quite mobile in the ribosome, and is involved in E site tRNA release. In terms of biological role, protein L1 is also a translational repressor protein, it controls the translation of the L11 operon by binding to its mRNA. The protein is Large ribosomal subunit protein uL1 of Bartonella henselae (strain ATCC 49882 / DSM 28221 / CCUG 30454 / Houston 1) (Rochalimaea henselae).